Consider the following 252-residue polypeptide: 1-(5-phosphoribosyl)-5-[(5-phosphoribosylamino)methylideneamino] imidazole-4-carboxamide isomerase (252 aa).

The active-site Proton acceptor is aspartate 8. Aspartate 129 serves as the catalytic Proton donor.

This sequence belongs to the HisA/HisF family.

Its subcellular location is the cytoplasm. It carries out the reaction 1-(5-phospho-beta-D-ribosyl)-5-[(5-phospho-beta-D-ribosylamino)methylideneamino]imidazole-4-carboxamide = 5-[(5-phospho-1-deoxy-D-ribulos-1-ylimino)methylamino]-1-(5-phospho-beta-D-ribosyl)imidazole-4-carboxamide. It functions in the pathway amino-acid biosynthesis; L-histidine biosynthesis; L-histidine from 5-phospho-alpha-D-ribose 1-diphosphate: step 4/9. The protein is 1-(5-phosphoribosyl)-5-[(5-phosphoribosylamino)methylideneamino] imidazole-4-carboxamide isomerase of Synechococcus sp. (strain RCC307).